Reading from the N-terminus, the 412-residue chain is Phosphatidylinositol 3,4,5-trisphosphate 3-phosphatase and protein-tyrosine-phosphatase PTEN1 (412 aa).

The region spanning 42-211 (RRLIIGGYDL…KYWSDLLSFS (170 aa)) is the Phosphatase tensin-type domain. C152 functions as the Phosphocysteine intermediate in the catalytic mechanism. One can recognise a C2 tensin-type domain in the interval 239–396 (VDSVFFVVSE…FSLELLFGPA (158 aa)).

It belongs to the PTEN phosphatase protein family. As to expression, expressed exclusively in pollen grains during the late stage of development (at protein level).

The catalysed reaction is O-phospho-L-tyrosyl-[protein] + H2O = L-tyrosyl-[protein] + phosphate. The enzyme catalyses a 1,2-diacyl-sn-glycero-3-phospho-(1D-myo-inositol-3,4,5-trisphosphate) + H2O = a 1,2-diacyl-sn-glycero-3-phospho-(1D-myo-inositol-4,5-bisphosphate) + phosphate. With respect to regulation, inhibited by vanadate. Functionally, protein tyrosine phosphatase that also exhibits lipid phosphatase activity. Can use phosphatidylinositol substrates such as PtdIns(3,4,5)P(3) as substrate. Pollen-specific phosphatase required for pollen development. The chain is Phosphatidylinositol 3,4,5-trisphosphate 3-phosphatase and protein-tyrosine-phosphatase PTEN1 from Arabidopsis thaliana (Mouse-ear cress).